Here is a 353-residue protein sequence, read N- to C-terminus: MKFALTGGGTGGHLSIAKALAIELEKQGIEAIYLGSTYGQDKEWFENSPLFSERYFFNTQGVVNKSFFKKIGSLFLQAKAAFKAKEILKKHQITHTISVGGFSAGPASFASLLNKIPLYIHEQNAIKGSLNRYLSPKAKAVFSSYAFKDKGHHVLTSYPVQNAFFDFARTRTEIKHILFLGGSQGAKAINEFALLNAPKLTKQGIKITHICGPNSYEQVRFFYQELGLLDKIELFAFHNNITEVMHRADLCVSRAGASSVWELCANGLPTIFIPYPFASNNHQYYNVLEFEKENLCYVAPQNELLPKKLFEVIRKLNQKDDQGNKNLTAISNQLQQKIAKDGAKTIIETILSA.

UDP-N-acetyl-alpha-D-glucosamine is bound by residues 10-12 (TGG), asparagine 124, serine 183, and glutamine 283.

This sequence belongs to the glycosyltransferase 28 family. MurG subfamily.

The protein localises to the cell inner membrane. It catalyses the reaction di-trans,octa-cis-undecaprenyl diphospho-N-acetyl-alpha-D-muramoyl-L-alanyl-D-glutamyl-meso-2,6-diaminopimeloyl-D-alanyl-D-alanine + UDP-N-acetyl-alpha-D-glucosamine = di-trans,octa-cis-undecaprenyl diphospho-[N-acetyl-alpha-D-glucosaminyl-(1-&gt;4)]-N-acetyl-alpha-D-muramoyl-L-alanyl-D-glutamyl-meso-2,6-diaminopimeloyl-D-alanyl-D-alanine + UDP + H(+). It participates in cell wall biogenesis; peptidoglycan biosynthesis. In terms of biological role, cell wall formation. Catalyzes the transfer of a GlcNAc subunit on undecaprenyl-pyrophosphoryl-MurNAc-pentapeptide (lipid intermediate I) to form undecaprenyl-pyrophosphoryl-MurNAc-(pentapeptide)GlcNAc (lipid intermediate II). This chain is UDP-N-acetylglucosamine--N-acetylmuramyl-(pentapeptide) pyrophosphoryl-undecaprenol N-acetylglucosamine transferase, found in Helicobacter pylori (strain HPAG1).